Reading from the N-terminus, the 122-residue chain is Small ribosomal subunit protein uS12cz/uS12cy (122 aa).

It belongs to the universal ribosomal protein uS12 family. In terms of assembly, part of the 30S ribosomal subunit.

The protein localises to the plastid. The protein resides in the chloroplast. Its function is as follows. With S4 and S5 plays an important role in translational accuracy. Located at the interface of the 30S and 50S subunits. The protein is Small ribosomal subunit protein uS12cz/uS12cy (rps12-A) of Triticum aestivum (Wheat).